Consider the following 363-residue polypeptide: Somatostatin receptor type 5 (363 aa).

The Extracellular segment spans residues 1–35; the sequence is MEPLSLASTPSWNASAASSGNHNWSLVGSASPMGA. 2 N-linked (GlcNAc...) asparagine glycosylation sites follow: asparagine 13 and asparagine 23. Residues 36–63 traverse the membrane as a helical segment; the sequence is RAVLVPVLYLLVCTVGLSGNTLVIYVVL. Topologically, residues 64 to 73 are cytoplasmic; sequence RHAKMKTVTN. Residues 74-99 traverse the membrane as a helical segment; the sequence is VYILNLAVADVLFMLGLPFLATQNAV. Over 100 to 111 the chain is Extracellular; the sequence is VSYWPFGSFLCR. A disulfide bridge connects residues cysteine 110 and cysteine 185. Residues 112–133 traverse the membrane as a helical segment; that stretch reads LVMTLDGINQFTSIFCLMVMSV. Residues 134 to 155 lie on the Cytoplasmic side of the membrane; sequence DRYLAVVHPLRSARWRRPRVAK. The chain crosses the membrane as a helical span at residues 156 to 176; the sequence is MASAAVWVFSLLMSLPLLVFA. Residues 177–196 lie on the Extracellular side of the membrane; the sequence is DVQEGWGTCNLSWPEPVGLW. N-linked (GlcNAc...) asparagine glycosylation is present at asparagine 186. The helical transmembrane segment at 197 to 221 threads the bilayer; sequence GAAFITYTSVLGFFGPLLVICLCYL. The Cytoplasmic portion of the chain corresponds to 222–247; sequence LIVVKVKAAGMRVGSSRRRRSEPKVT. The helical transmembrane segment at 248-273 threads the bilayer; that stretch reads RMVVVVVLVFVGCWLPFFIVNIVNLA. Residues 274–283 are Extracellular-facing; it reads FTLPEEPTSA. Residues 284–308 traverse the membrane as a helical segment; the sequence is GLYFFVVVLSYANSCANPLLYGFLS. Residues 309–363 lie on the Cytoplasmic side of the membrane; that stretch reads DNFRQSFRKVLCLRRGYGMEDADAIEPRPDKSGRPQATLPTRSCEANGLMQTSRI. Cysteine 320 carries S-palmitoyl cysteine; by ZDHHC5 lipidation. The segment at 331–363 is disordered; the sequence is DAIEPRPDKSGRPQATLPTRSCEANGLMQTSRI.

It belongs to the G-protein coupled receptor 1 family. In terms of assembly, heterodimer with SSTR2. Heterodimerization with SSTR2 increases cell growth inhibition activity of SSTR2. In terms of processing, palmitoylated at Cys-320 by ZDHHC5, but not ZDHHC8. Palmitoylation creates an additional intracellular loop which is thought to be important for efficient coupling to G-proteins and may target the protein to lipid rafts. Prominent in the pituitary and small intestine. Low levels in islets and spleen. Not detected in kidney, pancreas, cerebellum, or cortex.

The protein localises to the cell membrane. Functionally, receptor for somatostatin-28. The activity of this receptor is mediated by G proteins which inhibit adenylyl cyclase. Increases cell growth inhibition activity of SSTR2 following heterodimerization. The protein is Somatostatin receptor type 5 (Sstr5) of Rattus norvegicus (Rat).